A 140-amino-acid polypeptide reads, in one-letter code: uncharacterized protein (140 aa).

A run of 2 helical transmembrane segments spans residues 4 to 21 and 26 to 48; these read ILKIGILGFGAVFGYLFG and LVKVLVCFIVADYISGLLASGYL.

The protein belongs to the bacteriophage holin family. Cp-1 holin subfamily.

It is found in the cell membrane. This is an uncharacterized protein from Listeria innocua serovar 6a (strain ATCC BAA-680 / CLIP 11262).